A 186-amino-acid chain; its full sequence is Akirin-1 (186 aa).

Residues 1–64 (MACGATLKRS…PLPQLGGDRR (64 aa)) form a disordered region. A Nuclear localization signal motif is present at residues 22–27 (PKRRRC). The span at 49–60 (QQGQQQPLPQLG) shows a compositional bias: low complexity. The short motif at 183–186 (SYVS) is the SYVS motif element.

Belongs to the akirin family.

The protein localises to the nucleus. Its function is as follows. Molecular adapter that acts as a bridge between proteins, and which is involved skeletal muscle development. Functions as a signal transducer for MSTN during skeletal muscle regeneration and myogenesis. The sequence is that of Akirin-1 from Xenopus tropicalis (Western clawed frog).